A 406-amino-acid polypeptide reads, in one-letter code: 4-hydroxy-3-methylbut-2-en-1-yl diphosphate synthase (ferredoxin) (406 aa).

[4Fe-4S] cluster-binding residues include Cys-315, Cys-318, Cys-349, and Glu-356.

Belongs to the IspG family. [4Fe-4S] cluster is required as a cofactor.

It carries out the reaction (2E)-4-hydroxy-3-methylbut-2-enyl diphosphate + 2 oxidized [2Fe-2S]-[ferredoxin] + H2O = 2-C-methyl-D-erythritol 2,4-cyclic diphosphate + 2 reduced [2Fe-2S]-[ferredoxin] + H(+). The protein operates within isoprenoid biosynthesis; isopentenyl diphosphate biosynthesis via DXP pathway; isopentenyl diphosphate from 1-deoxy-D-xylulose 5-phosphate: step 5/6. Its function is as follows. Converts 2C-methyl-D-erythritol 2,4-cyclodiphosphate (ME-2,4cPP) into 1-hydroxy-2-methyl-2-(E)-butenyl 4-diphosphate. This Microcystis aeruginosa (strain NIES-843 / IAM M-2473) protein is 4-hydroxy-3-methylbut-2-en-1-yl diphosphate synthase (ferredoxin).